Reading from the N-terminus, the 203-residue chain is ATP-dependent Clp protease proteolytic subunit 2 (203 aa).

Catalysis depends on serine 97, which acts as the Nucleophile. Histidine 122 is a catalytic residue.

The protein belongs to the peptidase S14 family. Fourteen ClpP subunits assemble into 2 heptameric rings which stack back to back to give a disk-like structure with a central cavity, resembling the structure of eukaryotic proteasomes.

Its subcellular location is the cytoplasm. The enzyme catalyses Hydrolysis of proteins to small peptides in the presence of ATP and magnesium. alpha-casein is the usual test substrate. In the absence of ATP, only oligopeptides shorter than five residues are hydrolyzed (such as succinyl-Leu-Tyr-|-NHMec, and Leu-Tyr-Leu-|-Tyr-Trp, in which cleavage of the -Tyr-|-Leu- and -Tyr-|-Trp bonds also occurs).. In terms of biological role, cleaves peptides in various proteins in a process that requires ATP hydrolysis. Has a chymotrypsin-like activity. Plays a major role in the degradation of misfolded proteins. This Myxococcus xanthus (strain DK1622) protein is ATP-dependent Clp protease proteolytic subunit 2.